We begin with the raw amino-acid sequence, 307 residues long: Taste receptor type 2 member 10 (307 aa).

Over Met1–Glu6 the chain is Extracellular. A helical membrane pass occupies residues Gly7–Ile27. The Cytoplasmic portion of the chain corresponds to Gly28–Thr42. Residues Ile43–Thr63 form a helical membrane-spanning segment. The Extracellular segment spans residues Asp64–Thr100. Asn92 carries an N-linked (GlcNAc...) asparagine glycan. Residues Ser101 to Leu121 traverse the membrane as a helical segment. The Cytoplasmic portion of the chain corresponds to Lys122–Asn126. The chain crosses the membrane as a helical span at residues Met127–Ile147. Over Ala148–Asn179 the chain is Extracellular. An N-linked (GlcNAc...) asparagine glycan is attached at Asn158. The helical transmembrane segment at Leu180–Leu200 threads the bilayer. Residues Trp201 to Lys227 lie on the Cytoplasmic side of the membrane. The chain crosses the membrane as a helical span at residues Val228–Ser248. Residues Cys249–Leu257 lie on the Extracellular side of the membrane. Residues Leu258–Ile278 traverse the membrane as a helical segment. At Leu279–Thr307 the chain is on the cytoplasmic side.

It belongs to the G-protein coupled receptor T2R family. As to expression, expressed in subsets of taste receptor cells of the tongue and palate epithelium and exclusively in gustducin-positive cells.

The protein resides in the membrane. Functionally, gustducin-coupled strychnine receptor implicated in the perception of bitter compounds in the oral cavity and the gastrointestinal tract. Signals through PLCB2 and the calcium-regulated cation channel TRPM5. In Homo sapiens (Human), this protein is Taste receptor type 2 member 10 (TAS2R10).